The following is a 148-amino-acid chain: Large ribosomal subunit protein uL15 (148 aa).

The span at 1 to 28 shows a compositional bias: basic residues; it reads MIRRRKKVRKLRGSHTHGWGCKKKHRGG. The tract at residues 1–43 is disordered; sequence MIRRRKKVRKLRGSHTHGWGCKKKHRGGGSKGGRGMAGTGKRK. Positions 29-38 are enriched in gly residues; it reads GSKGGRGMAG.

It belongs to the universal ribosomal protein uL15 family. Part of the 50S ribosomal subunit.

Functionally, binds to the 23S rRNA. The chain is Large ribosomal subunit protein uL15 from Thermococcus kodakarensis (strain ATCC BAA-918 / JCM 12380 / KOD1) (Pyrococcus kodakaraensis (strain KOD1)).